We begin with the raw amino-acid sequence, 61 residues long: Large ribosomal subunit protein bL28 (61 aa).

Belongs to the bacterial ribosomal protein bL28 family.

The polypeptide is Large ribosomal subunit protein bL28 (Lactobacillus johnsonii (strain CNCM I-12250 / La1 / NCC 533)).